A 292-amino-acid polypeptide reads, in one-letter code: Ribosomal protein L11 methyltransferase (292 aa).

S-adenosyl-L-methionine-binding residues include T144, G165, D187, and N229.

It belongs to the methyltransferase superfamily. PrmA family.

The protein resides in the cytoplasm. The catalysed reaction is L-lysyl-[protein] + 3 S-adenosyl-L-methionine = N(6),N(6),N(6)-trimethyl-L-lysyl-[protein] + 3 S-adenosyl-L-homocysteine + 3 H(+). Functionally, methylates ribosomal protein L11. This is Ribosomal protein L11 methyltransferase from Ectopseudomonas mendocina (strain ymp) (Pseudomonas mendocina).